A 265-amino-acid chain; its full sequence is tRNA (guanine-N(1)-)-methyltransferase (265 aa).

S-adenosyl-L-methionine-binding positions include G119 and 139 to 144 (VGDYIL).

This sequence belongs to the RNA methyltransferase TrmD family. As to quaternary structure, homodimer.

The protein resides in the cytoplasm. The catalysed reaction is guanosine(37) in tRNA + S-adenosyl-L-methionine = N(1)-methylguanosine(37) in tRNA + S-adenosyl-L-homocysteine + H(+). In terms of biological role, specifically methylates guanosine-37 in various tRNAs. The polypeptide is tRNA (guanine-N(1)-)-methyltransferase (Pseudoalteromonas atlantica (strain T6c / ATCC BAA-1087)).